Here is a 179-residue protein sequence, read N- to C-terminus: MSLKTRYRETIRPKLLKDLGLKNVHQVPKVQKVTLNRGLGEAATNSKALEASLKEMATISGQKALVTRAKKAIATFKIRQGMPIGCSVTLRGDRMYAFLERFINLALPRIRDFRGVSPKSFDGRGNYTIGVKEQLIFPEITFDKVDTIRGMDITIVTSASSDEQGKALLSEMGMPFRKK.

It belongs to the universal ribosomal protein uL5 family. Part of the 50S ribosomal subunit; part of the 5S rRNA/L5/L18/L25 subcomplex. Contacts the 5S rRNA and the P site tRNA. Forms a bridge to the 30S subunit in the 70S ribosome.

Functionally, this is one of the proteins that bind and probably mediate the attachment of the 5S RNA into the large ribosomal subunit, where it forms part of the central protuberance. In the 70S ribosome it contacts protein S13 of the 30S subunit (bridge B1b), connecting the 2 subunits; this bridge is implicated in subunit movement. Contacts the P site tRNA; the 5S rRNA and some of its associated proteins might help stabilize positioning of ribosome-bound tRNAs. This Prochlorococcus marinus (strain NATL1A) protein is Large ribosomal subunit protein uL5.